We begin with the raw amino-acid sequence, 422 residues long: Electron transfer flavoprotein subunit alpha (422 aa).

Residues 61–80 (KRIDRSGTQQGAGGGKASAS) form a disordered region. Residues 329–330 (SR), 343–347 (QVGAT), 360–367 (GISGAIQH), and N381 each bind FAD.

Belongs to the ETF alpha-subunit/FixB family. As to quaternary structure, heterodimer of an alpha and a beta subunit. Requires FAD as cofactor.

Functionally, participates in the electron transfer process during N,N-dimethylglycine (DMG) degradation to sarcosine. The sequence is that of Electron transfer flavoprotein subunit alpha from Chromohalobacter salexigens (strain ATCC BAA-138 / DSM 3043 / CIP 106854 / NCIMB 13768 / 1H11).